Here is a 334-residue protein sequence, read N- to C-terminus: Protein-glutamate methylesterase/protein-glutamine glutaminase 2 (334 aa).

Residues 2–120 (NIGIVNDLPL…GAAGDTTKLL (119 aa)) enclose the Response regulatory domain. D53 carries the 4-aspartylphosphate modification. Residues 134–334 (PGSSRLAGAA…AGELAALARI (201 aa)) enclose the CheB-type methylesterase domain. Residues S157, H184, and D277 contribute to the active site.

This sequence belongs to the CheB family. Phosphorylated by CheA. Phosphorylation of the N-terminal regulatory domain activates the methylesterase activity.

It is found in the cytoplasm. The catalysed reaction is [protein]-L-glutamate 5-O-methyl ester + H2O = L-glutamyl-[protein] + methanol + H(+). The enzyme catalyses L-glutaminyl-[protein] + H2O = L-glutamyl-[protein] + NH4(+). In terms of biological role, involved in chemotaxis. Part of a chemotaxis signal transduction system that modulates chemotaxis in response to various stimuli. Catalyzes the demethylation of specific methylglutamate residues introduced into the chemoreceptors (methyl-accepting chemotaxis proteins or MCP) by CheR. Also mediates the irreversible deamidation of specific glutamine residues to glutamic acid. In Burkholderia orbicola (strain AU 1054), this protein is Protein-glutamate methylesterase/protein-glutamine glutaminase 2.